We begin with the raw amino-acid sequence, 3387 residues long: MNQRKKVVRPPFNMLKRERNRVSTPQGLVKRFSIGLFSGKGPLRMVLAFITFLRVLSIPPTAGILKRWGQLKKTKAIKILTGFRKEIGRMLNILNGRKRSTVTLLCLIPTVMAFHLSTRDGEPLMIVAKHERGRPLLFKTTEGINKCTLIAMDLGEMCEDTVTYKCPLLVNTEPEDIDCWCNLTSTWVMYGTCTQNGERRREKRSVALTPHSGMGLETRAETWMSSEGAWKHAQRVESWILRNPGFALLAGFMAYMIGQTGIQRTVFFVLMMLVAPSYGMRCIGVGNRDFVEGVSGGAWVDLVLEHGGCVTTMAQGKPTLDFELIKTTAKEVALLRTYCIEASISNITTATRCPTQGEPYLKEEQDQQYICRRDVVDRGWGNGCGLFGKGGVVTCAKFSCSGKITGNLVQIENLEYTVVVTVHNGDTHAVGNDTSNHGVTATITPRSPSVEVELPDYGELSLDCEPRSGIDFNEMILMKMEKKTWLVHKQWFLDLPLPWTAGADTSEVHWNHKERMVTFKVPHAKRQDVTVLGSQEGAMHSALTGATEVDSGDGNHMFAGHLKCKVRMEKLRIKGMSYTMCSGKFSIDREMAETQHGTTVVKVKYEGTGAPCKVPIEIRDVNKEKVVGRIISSTPFAENTNSVTNIELEPPFGDSYIVIGVGDSALTLHWFRKGSSIGKMFESTYRGAKRMAILGETAWDFGSVGGLFTSLGKAVHQVFGSVYTTMFGGVSWMVRILIGLLVLWIGTNSRNTPMAMTCIAVGGITLFLGFTVQADMGCVVSWTGKELKCGSGIFVTDNVHTWTEQYQFQPESPARLASAILNAHKDGVCGIRSTTRLENVMWKQITNELNYVLWEGGHDLTVVAGDVKGVLVKGKRALTPPVNDLKYSWKTWGKAKIFTPEAKNSTFLIDGPDTSECPNERRAWNFLEVEDYGFGMFTTSIWMKFREGSSEVCDHRLMSAAIKDQKAVHADMGYWLESSKNQTWQIEKASLIEVKTCLWPKTHTLWSNGVLESQMLIPKAYAGPFSQHNYRQGYATQTMGPWHLGKLEIDFGECPGTTVTIQEDCDHRGPSLRTTTASGKLVTQWCCRSCTMPPLRFLGEDGCWYGMEIRPLSEREENMVKSQVSAGQGSSETFSMGLLCLTLFIEECLRRKVTRKHMILVVVTTFCAIILGGLTWMDLLRAIIMLGDTMLSRVGGQTHLAIMIVFKMSPGYVLGVFLRKLTSRETALMVIGMAMTTVFSIPHDLMELIDGISLGLILLKMVTHFDNTQVGTLALSLTFIRSTMPLTMAWRTIMAVLFAVTLIPLCRTSCLQKQSHWVEITAIILGAQALPVYLMTLMKGASKRSWPLNEGIMAVGLVSLLGSALLKNDVPLAGPMVAGGLLLAAYVMSGSSADLSLERAANVQWDEMADITGSSPIIEVKQDEDGSFSIRDVEETNMITLLVKLALITVSGLYPLAIPITMTLWYMWQVRTQRSGALWDVPSPATAQKATLTEGVYRIMQRGLLGRTQVGVGIHMEGVFHTMWHVTRGSVICHETGRLEPSWADVRNDMISYGGGWRLGDKWDKEEDVQVLAIEPGKNPKHVQTKPGLFKTLTGEIGAVTLDFKPGTSGSPIINKKGKVIGLYGNGVVTKSGDYVSAITQAERIGEPDYEVDEDIFRKKRLTIMDLHPGAGKTKRILPSIVREALKRRLRTLILAPTRVVAAEMEEALRGLPIRYQTPAVKSEHTGREIVDLMCHATFTTRLLSSTRVPNYNLIVMDEAHFTDPSSVAARGYISTRVEMGEAAAIFMTATPPGATDPFPQSNSPIEDIEREIPERSWNTGFDWITDYQGKTVWFVPSIKAGNDIANCLRKSGKKVIQLSRKTFDTEYPKTKLTDWDFVVTTDISEMGANFRAGRVIDPRRCLKPVILTDGPERVILAGPIPVTPASAAQRRGRIGRNPAQEDDQYVFSGDPLKNDEDHAHWTEAKMLLDNIYTPEGIIPTLFGPEREKTQAIDGEFRLRGEQRKTFVELMKRGDLPVWLSYKVASAGISYKDREWCFTGERNNQILEENMEVEIWTREGEKKKLRPKWLDARVYADPMALKDFKEFASGRKSITLDILTEIASLPTYLSSRAKLALDNIVMLHTTERGGRAYQHALNELPESLETLMLVALLGAMTAGIFLFFMQGKGIGKLSVGLIAIAVASGLLWVAEIQPQWIAASIILEFFLMVLLIPEPEKQRTPQDNQLIYVILAILTIIGLVAANEMGLIEKTKADFGFYQVKTETTILDVDLRPASAWTLYAVATTILTPMLRHTIENTSANLSLAAIANQAAVLMGLGKGWPLHRMDLGVPLLAMGCYSQVNPTTLTASLVMLLVHYAIIGPGLQAKATREAQKRTAAGIMKNPTVDGITVIDLEPISYDPKFEKQLGQVMLLVLCAGQLLLMRTTWAFCEVLTLATGPVLTLWEGNPGRFWNTTIAVSTANIFRGSYLAGAGLAFSLIKNAQTPRRGTGTTGETLGEKWKRQLNSLDRKEFEEYKRSGILEVDRTEAKSALKDGSKIKHAVSRGSSKIRWIVERGMVKPKGKVVDLGCGRGGWSYYMATLKNVTEVKGYTKGGPGHEEPIPMATYGWNLVKLHSGVDVFYKPTEQVDTLLCDIGESSSNPTIEEGRTLRVLKMVEPWLSSKPEFCIKVLNPYMPTVIEELEKLQRKHGGSLIRCPLSRNSTHEMYWVSGASGNIVSSVNTTSKMLLNRFTTRHRKPTYEKDVDLGAGTRSVSTETEKPDMTIIGRRLQRLQEEHKETWHYDQENPYRTWAYHGSYEAPSTGSASSMVNGVVKLLTKPWDVIPMVTQLAMTDTTPFGQQRVFKEKVDTRTPQPKLGTRVVMTTTANWLWALLGRKKNPRLCTREEFISKVRSNAAIGAVFQEEQGWTSASEAVNDSRFWELVDKERALHQEGKCESCVYNMMGKREKKLGEFGRAKGSRAIWYMWLGARFLEFEALGFLNEDHWFGRENSWSGVEGEGLHRLGYILEDIDRKDGDLMYADDTAGWDTRITEDDLLNEELITEQMAPHHRILAKAIFKLTYQNKVVKVLRPTPKGAVMDIISRKDQRGSGQVGTYGLNTFTNMEVQLIRQMEAEGVITQDDMQNPKGLKERVEKWLKECGVDRLKRMAISGDDCVVKPLDERFSTSLLFLNDMGKVRKDIPQWEPSKGWKNWQEVPFCSHHFHKIFMKDGRSLVVPCRNQDELIGRARISQGAGWSLKETACLGKAYAQMWSLMYFHRRDLRLASMAICSAVPTEWFPTSRTTWSIHAHHQWMTTEDMLKVWNRVWIEDNPNMTDKTPVHSWEDIPYLGKREDLWCGSLIGLSSRATWAKNIHTAITQVRNLIGKEEYVDYMPVMRRYSALSESEGVL.

Topologically, residues 1–100 (MNQRKKVVRP…LNILNGRKRS (100 aa)) are cytoplasmic. Residues 36–71 (LFSGKGPLRMVLAFITFLRVLSIPPTAGILKRWGQL) are hydrophobic; homodimerization of capsid protein C. A propeptide spans 100-113 (STVTLLCLIPTVMA) (ER anchor for the capsid protein C, removed in mature form by serine protease NS3). The chain crosses the membrane as a helical span at residues 101-117 (TVTLLCLIPTVMAFHLS). Residues 118-237 (TRDGEPLMIV…GAWKHAQRVE (120 aa)) are Extracellular-facing. A glycan (N-linked (GlcNAc...) asparagine; by host) is linked at Asn182. Residues 238-258 (SWILRNPGFALLAGFMAYMIG) form a helical membrane-spanning segment. Residues 259-265 (QTGIQRT) are Cytoplasmic-facing. Residues 266 to 279 (VFFVLMMLVAPSYG) form a helical membrane-spanning segment. Residues 280-725 (MRCIGVGNRD…HQVFGSVYTT (446 aa)) are Extracellular-facing. 4 disulfides stabilise this stretch: Cys282/Cys309, Cys339/Cys400, Cys353/Cys384, and Cys371/Cys395. The N-linked (GlcNAc...) asparagine; by host glycan is linked to Asn346. The segment at 377 to 390 (DRGWGNGCGLFGKG) is fusion peptide. N-linked (GlcNAc...) asparagine; by host glycosylation occurs at Asn432. Disulfide bonds link Cys464–Cys564 and Cys581–Cys612. Residues 726–746 (MFGGVSWMVRILIGLLVLWIG) traverse the membrane as a helical segment. The Cytoplasmic segment spans residues 747–751 (TNSRN). The helical transmembrane segment at 752–772 (TPMAMTCIAVGGITLFLGFTV) threads the bilayer. Over 773–1193 (QADMGCVVSW…IMLGDTMLSR (421 aa)) the chain is Extracellular. 6 disulfide bridges follow: Cys778–Cys789, Cys829–Cys917, Cys953–Cys997, Cys1054–Cys1103, Cys1065–Cys1087, and Cys1086–Cys1090. Residues Asn904 and Asn981 are each glycosylated (N-linked (GlcNAc...) asparagine; by host). Residues 1194-1218 (VGGQTHLAIMIVFKMSPGYVLGVFL) form a helical membrane-spanning segment. Residues 1219–1224 (RKLTSR) are Lumenal-facing. A helical membrane pass occupies residues 1225–1243 (ETALMVIGMAMTTVFSIPH). Residues 1244 to 1267 (DLMELIDGISLGLILLKMVTHFDN) are Cytoplasmic-facing. A helical membrane pass occupies residues 1268–1288 (TQVGTLALSLTFIRSTMPLTM). Residue Ala1289 is a topological domain, lumenal. Residues 1290–1308 (WRTIMAVLFAVTLIPLCRT) form a helical membrane-spanning segment. At 1309-1316 (SCLQKQSH) the chain is on the lumenal side. Residues 1317-1337 (WVEITAIILGAQALPVYLMTL) traverse the membrane as a helical segment. Residues 1338 to 1345 (MKGASKRS) lie on the Cytoplasmic side of the membrane. A helical membrane pass occupies residues 1346–1366 (WPLNEGIMAVGLVSLLGSALL). At 1367-1369 (KND) the chain is on the lumenal side. The chain crosses the membrane as a helical span at residues 1370–1390 (VPLAGPMVAGGLLLAAYVMSG). Over 1391 to 1444 (SSADLSLERAANVQWDEMADITGSSPIIEVKQDEDGSFSIRDVEETNMITLLVK) the chain is Cytoplasmic. The interval 1397–1436 (LERAANVQWDEMADITGSSPIIEVKQDEDGSFSIRDVEET) is interacts with and activates NS3 protease. The helical intramembrane region spans 1445–1465 (LALITVSGLYPLAIPITMTLW). The Cytoplasmic segment spans residues 1466–2146 (YMWQVRTQRS…LNELPESLET (681 aa)). The 178-residue stretch at 1475 to 1652 (SGALWDVPSP…ERIGEPDYEV (178 aa)) folds into the Peptidase S7 domain. Active-site charge relay system; for serine protease NS3 activity residues include His1525, Asp1549, and Ser1609. A Helicase ATP-binding domain is found at 1654 to 1810 (EDIFRKKRLT…QSNSPIEDIE (157 aa)). The interval 1658–1661 (RKKR) is important for RNA-binding. An ATP-binding site is contributed by 1667–1674 (LHPGAGKT). The short motif at 1758-1761 (DEAH) is the DEAH box element. The 168-residue stretch at 1820 to 1987 (TGFDWITDYQ…IIPTLFGPER (168 aa)) folds into the Helicase C-terminal domain. Residue Lys1862 is modified to N6-acetyllysine; by host. Residues 2147-2167 (LMLVALLGAMTAGIFLFFMQG) traverse the membrane as a helical segment. The Lumenal segment spans residues 2168–2169 (KG). Positions 2170 to 2190 (IGKLSVGLIAIAVASGLLWVA) form an intramembrane region, helical. Residue Glu2191 is a topological domain, lumenal. The helical transmembrane segment at 2192–2212 (IQPQWIAASIILEFFLMVLLI) threads the bilayer. The Cytoplasmic segment spans residues 2213–2225 (PEPEKQRTPQDNQ). The helical transmembrane segment at 2226 to 2246 (LIYVILAILTIIGLVAANEMG) threads the bilayer. Residues 2247–2270 (LIEKTKADFGFYQVKTETTILDVD) lie on the Lumenal side of the membrane. The helical intramembrane region spans 2271 to 2291 (LRPASAWTLYAVATTILTPML). Residues 2292–2301 (RHTIENTSAN) are Lumenal-facing. N-linked (GlcNAc...) asparagine; by host glycans are attached at residues Asn2297 and Asn2301. Positions 2302-2322 (LSLAAIANQAAVLMGLGKGWP) form an intramembrane region, helical. Residues 2323–2343 (LHRMDLGVPLLAMGCYSQVNP) are Lumenal-facing. Residues 2344–2364 (TTLTASLVMLLVHYAIIGPGL) traverse the membrane as a helical segment. Topologically, residues 2365 to 2409 (QAKATREAQKRTAAGIMKNPTVDGITVIDLEPISYDPKFEKQLGQ) are cytoplasmic. A helical transmembrane segment spans residues 2410–2430 (VMLLVLCAGQLLLMRTTWAFC). At 2431-2455 (EVLTLATGPVLTLWEGNPGRFWNTT) the chain is on the lumenal side. N-linked (GlcNAc...) asparagine; by host glycosylation occurs at Asn2453. Residues 2456–2476 (IAVSTANIFRGSYLAGAGLAF) form a helical membrane-spanning segment. Residues 2477 to 3387 (SLIKNAQTPR…SALSESEGVL (911 aa)) lie on the Cytoplasmic side of the membrane. The 263-residue stretch at 2489–2751 (TGTTGETLGE…DVDLGAGTRS (263 aa)) folds into the mRNA cap 0-1 NS5-type MT domain. S-adenosyl-L-methionine is bound at residue Ser2543. Ser2543 bears the Phosphoserine mark. Lys2548 acts as the For 2'-O-MTase activity in catalysis. Residues 2564-2567 (VVDL) carry the SUMO-interacting motif motif. S-adenosyl-L-methionine-binding residues include Gly2573, Trp2574, Thr2591, Lys2592, Asp2618, and Val2619. The active-site For 2'-O-MTase activity is Asp2633. Ile2634 lines the S-adenosyl-L-methionine pocket. Active-site for 2'-O-MTase activity residues include Lys2668 and Glu2704. Tyr2706 lines the S-adenosyl-L-methionine pocket. 4 residues coordinate Zn(2+): Glu2925, His2929, Cys2934, and Cys2937. The RdRp catalytic domain maps to 3016 to 3166 (LMYADDTAGW…PLDERFSTSL (151 aa)). His3200, Cys3216, and Cys3335 together coordinate Zn(2+).

It in the N-terminal section; belongs to the class I-like SAM-binding methyltransferase superfamily. mRNA cap 0-1 NS5-type methyltransferase family. In terms of assembly, homodimer. Interacts (via N-terminus) with host EXOC1 (via C-terminus); this interaction results in EXOC1 degradation through the proteasome degradation pathway. As to quaternary structure, forms heterodimers with envelope protein E in the endoplasmic reticulum and Golgi. Homodimer; in the endoplasmic reticulum and Golgi. Interacts with protein prM. Interacts with non-structural protein 1. In terms of assembly, homodimer; Homohexamer when secreted. Interacts with envelope protein E. As to quaternary structure, interacts (via N-terminus) with serine protease NS3. Forms a heterodimer with serine protease NS3. May form homooligomers. In terms of assembly, forms a heterodimer with NS2B. Interacts with NS4B. Interacts with unphosphorylated RNA-directed RNA polymerase NS5; this interaction stimulates RNA-directed RNA polymerase NS5 guanylyltransferase activity. Interacts with host SHFL. As to quaternary structure, interacts with host MAVS; this interaction inhibits the synthesis of IFN-beta. Interacts with host SHFL. Interacts with host AUP1; the interaction occurs in the presence of Dengue virus NS4B and induces lipophagy which facilitates production of virus progeny particles. Interacts with serine protease NS3. In terms of assembly, homodimer. Interacts with host STAT2; this interaction inhibits the phosphorylation of the latter, and, when all viral proteins are present (polyprotein), targets STAT2 for degradation. Interacts with serine protease NS3. Interacts with host PAF1 complex; the interaction may prevent the recruitment of the PAF1 complex to interferon-responsive genes, and thus reduces the immune response. Specific enzymatic cleavages in vivo yield mature proteins. Cleavages in the lumen of endoplasmic reticulum are performed by host signal peptidase, whereas cleavages in the cytoplasmic side are performed by serine protease NS3. Signal cleavage at the 2K-4B site requires a prior NS3 protease-mediated cleavage at the 4A-2K site. Post-translationally, cleaved in post-Golgi vesicles by a host furin, releasing the mature small envelope protein M, and peptide pr. This cleavage is incomplete as up to 30% of viral particles still carry uncleaved prM. In terms of processing, N-glycosylated. N-glycosylated. The excreted form is glycosylated and this is required for efficient secretion of the protein from infected cells. Post-translationally, acetylated by host KAT5. Acetylation modulates NS3 RNA-binding and unwinding activities and plays an important positive role for viral replication. In terms of processing, sumoylation of RNA-directed RNA polymerase NS5 increases NS5 protein stability allowing proper viral RNA replication. Phosphorylated on serines residues. This phosphorylation may trigger NS5 nuclear localization.

The protein resides in the virion. Its subcellular location is the host nucleus. The protein localises to the host cytoplasm. It is found in the host perinuclear region. It localises to the secreted. The protein resides in the virion membrane. Its subcellular location is the host endoplasmic reticulum membrane. The protein localises to the host mitochondrion. The enzyme catalyses Selective hydrolysis of -Xaa-Xaa-|-Yaa- bonds in which each of the Xaa can be either Arg or Lys and Yaa can be either Ser or Ala.. It catalyses the reaction RNA(n) + a ribonucleoside 5'-triphosphate = RNA(n+1) + diphosphate. It carries out the reaction a ribonucleoside 5'-triphosphate + H2O = a ribonucleoside 5'-diphosphate + phosphate + H(+). The catalysed reaction is ATP + H2O = ADP + phosphate + H(+). The enzyme catalyses a 5'-end (5'-triphosphoguanosine)-ribonucleoside in mRNA + S-adenosyl-L-methionine = a 5'-end (N(7)-methyl 5'-triphosphoguanosine)-ribonucleoside in mRNA + S-adenosyl-L-homocysteine. It catalyses the reaction a 5'-end (N(7)-methyl 5'-triphosphoguanosine)-ribonucleoside in mRNA + S-adenosyl-L-methionine = a 5'-end (N(7)-methyl 5'-triphosphoguanosine)-(2'-O-methyl-ribonucleoside) in mRNA + S-adenosyl-L-homocysteine + H(+). Plays a role in virus budding by binding to the cell membrane and gathering the viral RNA into a nucleocapsid that forms the core of a mature virus particle. During virus entry, may induce genome penetration into the host cytoplasm after hemifusion induced by the surface proteins. Can migrate to the cell nucleus where it modulates host functions. Overcomes the anti-viral effects of host EXOC1 by sequestering and degrading the latter through the proteasome degradation pathway. In terms of biological role, inhibits RNA silencing by interfering with host Dicer. Its function is as follows. Prevents premature fusion activity of envelope proteins in trans-Golgi by binding to envelope protein E at pH6.0. After virion release in extracellular space, gets dissociated from E dimers. Functionally, acts as a chaperone for envelope protein E during intracellular virion assembly by masking and inactivating envelope protein E fusion peptide. prM is the only viral peptide matured by host furin in the trans-Golgi network probably to avoid catastrophic activation of the viral fusion activity in acidic Golgi compartment prior to virion release. prM-E cleavage is inefficient, and many virions are only partially matured. These uncleaved prM would play a role in immune evasion. May play a role in virus budding. Exerts cytotoxic effects by activating a mitochondrial apoptotic pathway through M ectodomain. May display a viroporin activity. In terms of biological role, binds to host cell surface receptor and mediates fusion between viral and cellular membranes. Envelope protein is synthesized in the endoplasmic reticulum in the form of heterodimer with protein prM. They play a role in virion budding in the ER, and the newly formed immature particle is covered with 60 spikes composed of heterodimer between precursor prM and envelope protein E. The virion is transported to the Golgi apparatus where the low pH causes dissociation of PrM-E heterodimers and formation of E homodimers. prM-E cleavage is inefficient, and many virions are only partially matured. These uncleaved prM would play a role in immune evasion. Its function is as follows. Involved in immune evasion, pathogenesis and viral replication. Once cleaved off the polyprotein, is targeted to three destinations: the viral replication cycle, the plasma membrane and the extracellular compartment. Essential for viral replication. Required for formation of the replication complex and recruitment of other non-structural proteins to the ER-derived membrane structures. Excreted as a hexameric lipoparticle that plays a role against host immune response. Antagonizing the complement function. Binds to the host macrophages and dendritic cells. Inhibits signal transduction originating from Toll-like receptor 3 (TLR3). Functionally, disrupts the host endothelial glycocalyx layer of host pulmonary microvascular endothelial cells, inducing degradation of sialic acid and shedding of heparan sulfate proteoglycans. NS1 induces expression of sialidases, heparanase, and activates cathepsin L, which activates heparanase via enzymatic cleavage. These effects are probably linked to the endothelial hyperpermeability observed in severe dengue disease. Component of the viral RNA replication complex that functions in virion assembly and antagonizes the host immune response. In terms of biological role, required cofactor for the serine protease function of NS3. May have membrane-destabilizing activity and form viroporins. Its function is as follows. Displays three enzymatic activities: serine protease, NTPase and RNA helicase. NS3 serine protease, in association with NS2B, performs its autocleavage and cleaves the polyprotein at dibasic sites in the cytoplasm: C-prM, NS2A-NS2B, NS2B-NS3, NS3-NS4A, NS4A-2K and NS4B-NS5. NS3 RNA helicase binds RNA and unwinds dsRNA in the 3' to 5' direction. Functionally, regulates the ATPase activity of the NS3 helicase activity. NS4A allows NS3 helicase to conserve energy during unwinding. Plays a role in the inhibition of the host innate immune response. Interacts with host MAVS and thereby prevents the interaction between RIGI and MAVS. In turn, IFN-beta production is impaired. Interacts with host AUP1 which mediates induction of lipophagy in host cells and facilitates production of virus progeny particles. Functions as a signal peptide for NS4B and is required for the interferon antagonism activity of the latter. In terms of biological role, induces the formation of ER-derived membrane vesicles where the viral replication takes place. Inhibits interferon (IFN)-induced host STAT1 phosphorylation and nuclear translocation, thereby preventing the establishment of cellular antiviral state by blocking the IFN-alpha/beta pathway. Its function is as follows. Replicates the viral (+) and (-) RNA genome, and performs the capping of genomes in the cytoplasm. NS5 methylates viral RNA cap at guanine N-7 and ribose 2'-O positions. Besides its role in RNA genome replication, also prevents the establishment of cellular antiviral state by blocking the interferon-alpha/beta (IFN-alpha/beta) signaling pathway. Inhibits host TYK2 and STAT2 phosphorylation, thereby preventing activation of JAK-STAT signaling pathway. May reduce immune responses by preventing the recruitment of the host PAF1 complex to interferon-responsive genes. This is Genome polyprotein from Aedes aegypti (Yellowfever mosquito).